Consider the following 93-residue polypeptide: Small ribosomal subunit protein uS19 (93 aa).

The protein belongs to the universal ribosomal protein uS19 family.

In terms of biological role, protein S19 forms a complex with S13 that binds strongly to the 16S ribosomal RNA. This is Small ribosomal subunit protein uS19 from Ligilactobacillus salivarius (strain UCC118) (Lactobacillus salivarius).